The following is a 449-amino-acid chain: Anther-specific proline-rich protein APG (449 aa).

The segment covering 1 to 118 has biased composition (pro residues); it reads PPKPQPKPPP…KPPAPSPPKP (118 aa). Residues 1–123 are disordered; that stretch reads PPKPQPKPPP…SPPKPQNKTI (123 aa). Ser132 functions as the Nucleophile in the catalytic mechanism. Active-site residues include Asp425 and His428.

This sequence belongs to the 'GDSL' lipolytic enzyme family. In terms of tissue distribution, found in anther, only in male fertile plants.

The protein is Anther-specific proline-rich protein APG (APG) of Brassica napus (Rape).